The primary structure comprises 744 residues: Collagen alpha-1(VIII) chain (744 aa).

An N-terminal signal peptide occupies residues 1–27 (MAVLPGPLQLLGVLLTISLSSIRLIQA). The segment at 29 to 117 (AYYGIKPLPP…GKEIPLASLR (89 aa)) is nonhelical region (NC2). Disordered regions lie at residues 115 to 393 (SLRG…GEPG) and 459 to 589 (GPKG…PDMG). Positions 118–571 (GEQGPRGEPG…PGPPGPPGPP (454 aa)) are triple-helical region (COL1). Residues 128–137 (PRGPPGPPGL) show a composition bias toward pro residues. Residues 168–178 (KPGAMGMPGAK) are compositionally biased toward low complexity. 2 stretches are compositionally biased toward gly residues: residues 203-217 (GLPG…GLPG) and 328-337 (GFPGGKGEQG). Composition is skewed to low complexity over residues 466-496 (QKGV…LQGP) and 538-556 (AGLH…QGQP). The span at 558–581 (LPGPPGPPGPPGPPAVMPPTPPPQ) shows a compositional bias: pro residues. The segment at 572-744 (AVMPPTPPPQ…SFSGYLLYPM (173 aa)) is nonhelical region (NC1). The 134-residue stretch at 611–744 (PAYEMPAFTA…SFSGYLLYPM (134 aa)) folds into the C1q domain.

Homotrimers, or heterotrimers in association with alpha 2(VIII) type collagens. Four homotrimers can form a tetrahedron stabilized by central interacting C-terminal NC1 trimers. Post-translationally, prolines at the third position of the tripeptide repeating unit (G-X-Y) are hydroxylated in some or all of the chains. In terms of processing, proteolytically cleaved by neutrophil elastase, in vitro. Proteolytic processing produces the C-terminal NC1 domain fragment, vastatin. In terms of tissue distribution, expressed primarily in the subendothelium of large blood vessels. Also expressed in arterioles and venules in muscle, heart, kidney, spleen, umbilical cord, liver and lung and is also found in connective tissue layers around hair follicles, around nerve bundles in muscle, in the dura of the optic nerve, in cornea and sclera, and in the perichondrium of cartilaginous tissues. In the kidney, expressed in mesangial cells, glomerular endothelial cells, and tubular epithelial cells. Also expressed in mast cells, and in astrocytes during the repair process. Expressed in Descemet's membrane. Specifically expressed in peritoneal fibroblasts and mesothelial cells.

It localises to the secreted. The protein resides in the extracellular space. The protein localises to the extracellular matrix. It is found in the basement membrane. Its function is as follows. Macromolecular component of the subendothelium. Major component of the Descemet's membrane (basement membrane) of corneal endothelial cells. Also a component of the endothelia of blood vessels. Necessary for migration and proliferation of vascular smooth muscle cells and thus, has a potential role in the maintenance of vessel wall integrity and structure, in particular in atherogenesis. Vastatin, the C-terminal fragment comprising the NC1 domain, inhibits aortic endothelial cell proliferation and causes cell apoptosis. This chain is Collagen alpha-1(VIII) chain (COL8A1), found in Homo sapiens (Human).